We begin with the raw amino-acid sequence, 1182 residues long: DNA-directed RNA polymerase subunit beta (1182 aa).

Residues 1150 to 1162 (DEEVEMKDEDDDN) show a composition bias toward acidic residues. The tract at residues 1150–1182 (DEEVEMKDEDDDNIPNATSALEQVVQPTVTEEE) is disordered. Residues 1171 to 1182 (EQVVQPTVTEEE) show a composition bias toward low complexity.

This sequence belongs to the RNA polymerase beta chain family. The RNAP catalytic core consists of 2 alpha, 1 beta, 1 beta' and 1 omega subunit. When a sigma factor is associated with the core the holoenzyme is formed, which can initiate transcription.

The catalysed reaction is RNA(n) + a ribonucleoside 5'-triphosphate = RNA(n+1) + diphosphate. In terms of biological role, DNA-dependent RNA polymerase catalyzes the transcription of DNA into RNA using the four ribonucleoside triphosphates as substrates. In Exiguobacterium sp. (strain ATCC BAA-1283 / AT1b), this protein is DNA-directed RNA polymerase subunit beta.